The sequence spans 815 residues: SNF1 protein kinase subunit beta-1 (815 aa).

The segment covering 1–11 (MGNSPSTQDPS) has biased composition (polar residues). Disordered stretches follow at residues 1-88 (MGNS…TIDK) and 117-148 (SDDHDVGAPEEQVKSPSFLSPGPSMATVKQTK). A lipid anchor (N-myristoyl glycine) is attached at glycine 2. A compositionally biased stretch (basic and acidic residues) spans 12–31 (HSTKKEHGHHFHDAFNKDRQ). Residues 32-42 (GSITSQLFNNR) show a composition bias toward polar residues. At serine 33 the chain carries Phosphoserine. 2 stretches are compositionally biased toward basic and acidic residues: residues 72 to 88 (PSTDCDGRMSSDTTIDK) and 117 to 129 (SDDHDVGAPEEQV). Phosphoserine occurs at positions 181, 198, 200, 206, 209, and 220. 3 disordered regions span residues 310 to 335 (SHANNNGNIENNTRNKGNAGGSNDDF), 363 to 389 (HQNKTKKAQNKKIRSASNSRRSSFASL), and 410 to 444 (PLHPIINDNESQYSAPQHREISHHSNSMSSMSSIS). Low complexity predominate over residues 313–326 (NNNGNIENNTRNKG). Phosphoserine is present on serine 331. Residues 363 to 376 (HQNKTKKAQNKKIR) are compositionally biased toward basic residues. Composition is skewed to low complexity over residues 377–389 (SASNSRRSSFASL) and 433–444 (HSNSMSSMSSIS). The interval 473 to 716 (VSTDIASALK…LQQGGNIDAE (244 aa)) is kinase-interacting sequence (KIS); required for interaction with SNF1. A phosphoserine mark is found at serine 494 and serine 497. Positions 583–616 (TLDEELPKRPELKRFPSSSRKSSYYSAKGVERPS) are disordered. A compositionally biased stretch (basic and acidic residues) spans 587 to 596 (ELPKRPELKR). The span at 599-608 (SSSRKSSYYS) shows a compositional bias: low complexity. At serine 643 the chain carries Phosphoserine. Residues 724-804 (SRYPVPDLPI…FITQVVYAPC (81 aa)) are association with SNF1 kinase complex (ASC) domain; required for interaction with SNF4.

This sequence belongs to the 5'-AMP-activated protein kinase beta subunit family. As to quaternary structure, component of the SNF1 kinase complex, a heterotrimeric complex composed of the catalytic alpha subunit SNF1, one of the three related beta subunits SIP1, SIP2 or GAL83, and the regulatory gamma subunit SNF4. The beta subunit serves as a bridge between the catalytic and the regulatory subunit. Interacts (via KIS domain) with SNF1. Interacts (via ASC domain) with SNF4. In terms of processing, phosphorylated by SNF1 in vitro.

It localises to the cytoplasm. The protein resides in the vacuole membrane. Functionally, beta subunit of the SNF1 kinase complex, which is required for transcriptional, metabolic, and developmental adaptations in response to glucose limitation. Has a structural role, mediating heterotrimer formation, and a regulatory role, defining carbon source-regulated subcellular location and substrate specificity of the SNF1 kinase complex. Promotes the PKA-regulated relocalization of the SNF1 kinase complex to the vacuolar membrane in response to various types of carbon stress. The protein is SNF1 protein kinase subunit beta-1 (SIP1) of Saccharomyces cerevisiae (strain YJM789) (Baker's yeast).